Reading from the N-terminus, the 146-residue chain is Large ribosomal subunit protein uL15 (146 aa).

A compositionally biased stretch (basic and acidic residues) spans 1 to 13 (MKLHELKAAEGSR). Residues 1 to 56 (MKLHELKAAEGSRRVRNRVGRGAGSGNGKTSGRGQKGQKARSGGGVRPGFEGGQLP) form a disordered region. Gly residues-rich tracts occupy residues 21–35 (RGAG…GRGQ) and 42–52 (SGGGVRPGFEG).

The protein belongs to the universal ribosomal protein uL15 family. As to quaternary structure, part of the 50S ribosomal subunit.

Functionally, binds to the 23S rRNA. In Staphylococcus haemolyticus (strain JCSC1435), this protein is Large ribosomal subunit protein uL15.